A 290-amino-acid polypeptide reads, in one-letter code: Porphobilinogen deaminase (290 aa).

Position 237 is an S-(dipyrrolylmethanemethyl)cysteine (cysteine 237).

This sequence belongs to the HMBS family. In terms of assembly, monomer. It depends on dipyrromethane as a cofactor.

It catalyses the reaction 4 porphobilinogen + H2O = hydroxymethylbilane + 4 NH4(+). Its pathway is porphyrin-containing compound metabolism; protoporphyrin-IX biosynthesis; coproporphyrinogen-III from 5-aminolevulinate: step 2/4. Its function is as follows. Tetrapolymerization of the monopyrrole PBG into the hydroxymethylbilane pre-uroporphyrinogen in several discrete steps. The chain is Porphobilinogen deaminase from Clostridium botulinum (strain Loch Maree / Type A3).